A 539-amino-acid polypeptide reads, in one-letter code: Chaperonin GroEL (539 aa).

Residues 29-32 (TLGP), 86-90 (DGTTT), G413, 476-478 (NAA), and D492 contribute to the ATP site.

The protein belongs to the chaperonin (HSP60) family. Forms a cylinder of 14 subunits composed of two heptameric rings stacked back-to-back. Interacts with the co-chaperonin GroES.

It localises to the cytoplasm. The catalysed reaction is ATP + H2O + a folded polypeptide = ADP + phosphate + an unfolded polypeptide.. In terms of biological role, together with its co-chaperonin GroES, plays an essential role in assisting protein folding. The GroEL-GroES system forms a nano-cage that allows encapsulation of the non-native substrate proteins and provides a physical environment optimized to promote and accelerate protein folding. The protein is Chaperonin GroEL of Geobacillus sp. (strain WCH70).